The sequence spans 138 residues: Cysteine desulfuration protein SufE (138 aa).

Cys-51 functions as the Cysteine persulfide intermediate in the catalytic mechanism.

It belongs to the SufE family. As to quaternary structure, homodimer. Interacts with SufS.

The protein resides in the cytoplasm. Its pathway is cofactor biosynthesis; iron-sulfur cluster biosynthesis. Functionally, participates in cysteine desulfuration mediated by SufS. Cysteine desulfuration mobilizes sulfur from L-cysteine to yield L-alanine and constitutes an essential step in sulfur metabolism for biosynthesis of a variety of sulfur-containing biomolecules. Functions as a sulfur acceptor for SufS, by mediating the direct transfer of the sulfur atom from the S-sulfanylcysteine of SufS, an intermediate product of cysteine desulfuration process. The protein is Cysteine desulfuration protein SufE of Pectobacterium atrosepticum (strain SCRI 1043 / ATCC BAA-672) (Erwinia carotovora subsp. atroseptica).